The following is a 441-amino-acid chain: Ribulose bisphosphate carboxylase large chain (441 aa).

At K5 the chain carries N6,N6,N6-trimethyllysine. Substrate is bound by residues N114 and T164. K166 functions as the Proton acceptor in the catalytic mechanism. K168 is a binding site for substrate. Mg(2+) is bound by residues K192, D194, and E195. N6-carboxylysine is present on K192. Catalysis depends on H285, which acts as the Proton acceptor. The substrate site is built by R286, H318, and S370.

The protein belongs to the RuBisCO large chain family. Type I subfamily. As to quaternary structure, heterohexadecamer of 8 large chains and 8 small chains; disulfide-linked. The disulfide link is formed within the large subunit homodimers. Mg(2+) serves as cofactor. In terms of processing, the disulfide bond which can form in the large chain dimeric partners within the hexadecamer appears to be associated with oxidative stress and protein turnover.

The protein localises to the plastid. Its subcellular location is the chloroplast. The catalysed reaction is 2 (2R)-3-phosphoglycerate + 2 H(+) = D-ribulose 1,5-bisphosphate + CO2 + H2O. It carries out the reaction D-ribulose 1,5-bisphosphate + O2 = 2-phosphoglycolate + (2R)-3-phosphoglycerate + 2 H(+). In terms of biological role, ruBisCO catalyzes two reactions: the carboxylation of D-ribulose 1,5-bisphosphate, the primary event in carbon dioxide fixation, as well as the oxidative fragmentation of the pentose substrate in the photorespiration process. Both reactions occur simultaneously and in competition at the same active site. This Pellaea rotundifolia (Button fern) protein is Ribulose bisphosphate carboxylase large chain.